We begin with the raw amino-acid sequence, 230 residues long: MHTTQKDTTYTKIFVGGLPYHTTDSSLRKYFEVFGEIEEAVVITDRQTGKSRGYGFVTMADRSAADRACKDPNPIIDGRKANVNLAYLGAKPRVMQPGFTFGVPQIHPAFIQRPYGIPTHYVYPQAFMQPSVVIPHIQPTATSATASSPYIDYTGAAYAQYASAATAAAAAAYEQYPYAASPAATGYVAAAGYGYAMQQPLATAAPGSAAAAAAAFGQYQPQQLQAERMQ.

The RRM domain occupies 11 to 88 (TKIFVGGLPY…RKANVNLAYL (78 aa)).

It is found in the nucleus. The protein localises to the cytoplasm. Its function is as follows. Multifunctional RNA-binding protein involved in the regulation of pre-mRNA splicing, mRNA stability and mRNA translation important for cell fate decision and differentiation. Plays a major role in pre-mRNA alternative splicing regulation. Mediates preferentially muscle-specific exon inclusion in numerous mRNAs important for striated cardiac and skeletal muscle cell differentiation. Binds to intronic splicing enhancer (ISE) composed of stretches of GU-rich motifs localized in flanking intron of exon that will be included by alternative splicing. Involved in embryonic stem cell (ESC) transition to cardiac cell differentiation by promoting pre-mRNA alternative splicing events of several pluripotency and/or differentiation genes. Plays a role in the regulation of mRNA stability and mRNA translation to which it is bound. Involved in myogenic differentiation by regulating myog levels. Binds to a huge amount of mRNAs. Required for embryonic heart development, sarcomer and M-band formation in striated muscles. The polypeptide is RNA-binding protein 24 (rbm24) (Danio rerio (Zebrafish)).